The chain runs to 142 residues: MKTYSAKSHEVQGDWFVVDATDKVLGRLSVELAKRLRGKHKPEYTPHADTGDYIVVINADKIAVTGNKAKDKIYYHHTGYVGNLKSASFEKMKETHPERIIELAVKGMLPKNPLGRAMFKKLKVYTGSEHPHSAQQPQPLNV.

The protein belongs to the universal ribosomal protein uL13 family. Part of the 50S ribosomal subunit.

Functionally, this protein is one of the early assembly proteins of the 50S ribosomal subunit, although it is not seen to bind rRNA by itself. It is important during the early stages of 50S assembly. This is Large ribosomal subunit protein uL13 from Acidithiobacillus ferrooxidans (strain ATCC 23270 / DSM 14882 / CIP 104768 / NCIMB 8455) (Ferrobacillus ferrooxidans (strain ATCC 23270)).